Here is a 255-residue protein sequence, read N- to C-terminus: Imidazole glycerol phosphate synthase subunit HisF (255 aa).

Catalysis depends on residues aspartate 11 and aspartate 130.

The protein belongs to the HisA/HisF family. In terms of assembly, heterodimer of HisH and HisF.

The protein localises to the cytoplasm. The enzyme catalyses 5-[(5-phospho-1-deoxy-D-ribulos-1-ylimino)methylamino]-1-(5-phospho-beta-D-ribosyl)imidazole-4-carboxamide + L-glutamine = D-erythro-1-(imidazol-4-yl)glycerol 3-phosphate + 5-amino-1-(5-phospho-beta-D-ribosyl)imidazole-4-carboxamide + L-glutamate + H(+). Its pathway is amino-acid biosynthesis; L-histidine biosynthesis; L-histidine from 5-phospho-alpha-D-ribose 1-diphosphate: step 5/9. Its function is as follows. IGPS catalyzes the conversion of PRFAR and glutamine to IGP, AICAR and glutamate. The HisF subunit catalyzes the cyclization activity that produces IGP and AICAR from PRFAR using the ammonia provided by the HisH subunit. The sequence is that of Imidazole glycerol phosphate synthase subunit HisF from Rhodopseudomonas palustris (strain BisA53).